The sequence spans 1606 residues: Phosphatidylinositol 3,4,5-trisphosphate-dependent Rac exchanger 2 protein (1606 aa).

One can recognise a DH domain in the interval 23-214 (LRVCVLSELQ…KAVCSNINEA (192 aa)). Residues 245-361 (EMLMCGVLLK…WFEAILKERE (117 aa)) form the PH domain. 2 DEP domains span residues 390–464 (CRQG…RFRY) and 491–566 (SLFT…FFSD). 2 PDZ domains span residues 592–671 (KSLL…VLVS) and 677–754 (TVKI…QDSI). A disordered region spans residues 1581–1606 (GVRDRTPQSAPRLYKLCEPPPPAGEE).

In terms of assembly, interacts with RAC1. In terms of tissue distribution, isoform 1 is highly expressed in skeletal muscle, heart and placenta, absent from peripheral blood leukocytes. Isoform 2 is expressed in skeletal muscle, kidney, small intestine, and placenta. Isoform 3 is expressed in the heart.

In terms of biological role, functions as a RAC1 guanine nucleotide exchange factor (GEF), activating Rac proteins by exchanging bound GDP for free GTP. Its activity is synergistically activated by phosphatidylinositol 3,4,5-trisphosphate and the beta gamma subunits of heterotrimeric G protein. Mediates the activation of RAC1 in a PI3K-dependent manner. May be an important mediator of Rac signaling, acting directly downstream of both G protein-coupled receptors and phosphoinositide 3-kinase. In Homo sapiens (Human), this protein is Phosphatidylinositol 3,4,5-trisphosphate-dependent Rac exchanger 2 protein.